The sequence spans 482 residues: MMETMPNWLKQRAFLTPDRTAIEIEEEKVTFMQLHEKVVSVCEHLTHVGVNRGQKVAVLMKNGMEMITVIHALSYVGAVAVLLNTRLSREELLWQMDDAEVICLVTDQDFEAKDIPVYSFAEVMNGPKEEASIQEEFSLREAMTIIYTSGTTGKPKGVILTYGNHWASAVGSSLNLGLRDDDCWLACMPMFHVGGLSLLMKNIMYGMRILLVPKYDADFIHKALQTRGVTIISVVSKMLTDLLERLGEGTYPSSFRCMLLGGGPAPKPLLETCVDKGIPVYQTYGMTETSSQICTLSADYMLTKVGSAGKPLFQCQLRIEKDGVVVPPFAEGEIVVKGPNVTGGYFNREDATRETIQNGWLHTGDLGYLDEEGFLYVLDRRSDLIISGGENIYPAQIEEVLLSHPMVAEAGVVGMTDDKWGQVPAAFVVKSGEITEEEILHFCEEKLAKYKVPKKACFLEELPRNASKKLLRRELRQLVEEM.

It belongs to the ATP-dependent AMP-binding enzyme family. MenE subfamily.

The enzyme catalyses 2-succinylbenzoate + ATP + CoA = 2-succinylbenzoyl-CoA + AMP + diphosphate. Its pathway is quinol/quinone metabolism; 1,4-dihydroxy-2-naphthoate biosynthesis; 1,4-dihydroxy-2-naphthoate from chorismate: step 5/7. It participates in quinol/quinone metabolism; menaquinone biosynthesis. Converts 2-succinylbenzoate (OSB) to 2-succinylbenzoyl-CoA (OSB-CoA). The chain is 2-succinylbenzoate--CoA ligase from Bacillus anthracis (strain A0248).